The sequence spans 37 residues: Esculentin-2A (37 aa).

An intrachain disulfide couples cysteine 31 to cysteine 37.

Belongs to the frog skin active peptide (FSAP) family. Esculentin subfamily. Expressed by the skin glands.

It is found in the secreted. In terms of biological role, shows antibacterial activity against representative Gram-negative and Gram-positive bacterial species, and hemolytic activity. This Pelophylax lessonae (Pool frog) protein is Esculentin-2A.